Consider the following 187-residue polypeptide: MPKINGNEIRPGNVLEHNGGLWAAVKVDHVKPGKGGAFAQVELRNLRNGSKLNERFRSADKVERVRLEQKDQQFLYESDGMLVFMDAETYEQIELPADLLGERRPFLQDGMTILVEFYESEALNATLPQKVTCKIVETEPVVKGQTAANSFKPAVLDNGVKVMVPPFVGQDEMIVVNTETMEYSERA.

Belongs to the elongation factor P family.

The protein localises to the cytoplasm. It participates in protein biosynthesis; polypeptide chain elongation. Functionally, involved in peptide bond synthesis. Stimulates efficient translation and peptide-bond synthesis on native or reconstituted 70S ribosomes in vitro. Probably functions indirectly by altering the affinity of the ribosome for aminoacyl-tRNA, thus increasing their reactivity as acceptors for peptidyl transferase. The protein is Elongation factor P of Ruegeria pomeroyi (strain ATCC 700808 / DSM 15171 / DSS-3) (Silicibacter pomeroyi).